A 401-amino-acid chain; its full sequence is Elongation factor Tu (401 aa).

Residues 10–211 (KPHLNVGTIG…ALDTFVPNPK (202 aa)) form the tr-type G domain. The tract at residues 19-26 (GHVDHGKT) is G1. 19 to 26 (GHVDHGKT) serves as a coordination point for GTP. T26 is a binding site for Mg(2+). The G2 stretch occupies residues 62-66 (GITIA). Residues 83–86 (DCPG) are G3. Residues 83 to 87 (DCPGH) and 138 to 141 (NKAD) each bind GTP. The interval 138–141 (NKAD) is G4. A G5 region spans residues 179–181 (SAV).

This sequence belongs to the TRAFAC class translation factor GTPase superfamily. Classic translation factor GTPase family. EF-Tu/EF-1A subfamily. In terms of assembly, monomer.

It localises to the cytoplasm. The catalysed reaction is GTP + H2O = GDP + phosphate + H(+). Functionally, GTP hydrolase that promotes the GTP-dependent binding of aminoacyl-tRNA to the A-site of ribosomes during protein biosynthesis. The sequence is that of Elongation factor Tu from Leptospira interrogans serogroup Icterohaemorrhagiae serovar copenhageni (strain Fiocruz L1-130).